The chain runs to 151 residues: uncharacterized protein (151 aa).

The interval 123 to 151 is disordered; it reads PAGQNAGTGPAQKLKTDETRCYERRGGSQ. Positions 136–151 are enriched in basic and acidic residues; the sequence is LKTDETRCYERRGGSQ.

This is an uncharacterized protein from Triticum aestivum (Wheat).